We begin with the raw amino-acid sequence, 160 residues long: Cyclic pyranopterin monophosphate synthase (160 aa).

Substrate contacts are provided by residues 75-77 (LCH) and 113-114 (ME). Asp-128 is a catalytic residue.

Belongs to the MoaC family. In terms of assembly, homohexamer; trimer of dimers.

It catalyses the reaction (8S)-3',8-cyclo-7,8-dihydroguanosine 5'-triphosphate = cyclic pyranopterin phosphate + diphosphate. Its pathway is cofactor biosynthesis; molybdopterin biosynthesis. Functionally, catalyzes the conversion of (8S)-3',8-cyclo-7,8-dihydroguanosine 5'-triphosphate to cyclic pyranopterin monophosphate (cPMP). In Ruthia magnifica subsp. Calyptogena magnifica, this protein is Cyclic pyranopterin monophosphate synthase.